A 318-amino-acid chain; its full sequence is 4-hydroxy-3-methylbut-2-enyl diphosphate reductase (318 aa).

A [4Fe-4S] cluster-binding site is contributed by Cys12. Residues His41 and His74 each coordinate (2E)-4-hydroxy-3-methylbut-2-enyl diphosphate. Dimethylallyl diphosphate-binding residues include His41 and His74. Residues His41 and His74 each contribute to the isopentenyl diphosphate site. [4Fe-4S] cluster is bound at residue Cys96. His124 contacts (2E)-4-hydroxy-3-methylbut-2-enyl diphosphate. Residue His124 participates in dimethylallyl diphosphate binding. His124 contributes to the isopentenyl diphosphate binding site. Catalysis depends on Glu126, which acts as the Proton donor. Thr168 contributes to the (2E)-4-hydroxy-3-methylbut-2-enyl diphosphate binding site. Cys198 lines the [4Fe-4S] cluster pocket. Positions 226, 227, 228, and 270 each coordinate (2E)-4-hydroxy-3-methylbut-2-enyl diphosphate. Dimethylallyl diphosphate contacts are provided by Ser226, Ser227, Asn228, and Ser270. Isopentenyl diphosphate-binding residues include Ser226, Ser227, Asn228, and Ser270.

This sequence belongs to the IspH family. Requires [4Fe-4S] cluster as cofactor.

It carries out the reaction isopentenyl diphosphate + 2 oxidized [2Fe-2S]-[ferredoxin] + H2O = (2E)-4-hydroxy-3-methylbut-2-enyl diphosphate + 2 reduced [2Fe-2S]-[ferredoxin] + 2 H(+). It catalyses the reaction dimethylallyl diphosphate + 2 oxidized [2Fe-2S]-[ferredoxin] + H2O = (2E)-4-hydroxy-3-methylbut-2-enyl diphosphate + 2 reduced [2Fe-2S]-[ferredoxin] + 2 H(+). It participates in isoprenoid biosynthesis; dimethylallyl diphosphate biosynthesis; dimethylallyl diphosphate from (2E)-4-hydroxy-3-methylbutenyl diphosphate: step 1/1. The protein operates within isoprenoid biosynthesis; isopentenyl diphosphate biosynthesis via DXP pathway; isopentenyl diphosphate from 1-deoxy-D-xylulose 5-phosphate: step 6/6. Its function is as follows. Catalyzes the conversion of 1-hydroxy-2-methyl-2-(E)-butenyl 4-diphosphate (HMBPP) into a mixture of isopentenyl diphosphate (IPP) and dimethylallyl diphosphate (DMAPP). Acts in the terminal step of the DOXP/MEP pathway for isoprenoid precursor biosynthesis. The sequence is that of 4-hydroxy-3-methylbut-2-enyl diphosphate reductase from Psychrobacter arcticus (strain DSM 17307 / VKM B-2377 / 273-4).